The chain runs to 1011 residues: Rap guanine nucleotide exchange factor 4 (1011 aa).

One can recognise a DEP domain in the interval 216-291 (SRAPHMIRDR…DKYLFYRFLD (76 aa)). 3',5'-cyclic AMP is bound by residues 422 to 425 (GKLA) and 432 to 433 (RA). In terms of domain architecture, N-terminal Ras-GEF spans 496–634 (QKYTVMSGTP…ELEKIVKQIS (139 aa)). Positions 772–1009 (SSKDLAYQMT…SQMSHRLEPR (238 aa)) constitute a Ras-GEF domain.

As to quaternary structure, interacts with RAP1B, RIMS1 and RIMS2. Probably part of a complex with RIMS2 and GTP-activated RAB3A. In terms of tissue distribution, expressed in cerebellum, pituitary, adrenal gland and liver.

The protein resides in the cytoplasm. It localises to the membrane. Functionally, guanine nucleotide exchange factor (GEF) for RAP1A, RAP1B and RAP2A small GTPases that is activated by binding cAMP. Seems not to activate RAB3A. Involved in cAMP-dependent, PKA-independent exocytosis through interaction with RIMS2. This Mus musculus (Mouse) protein is Rap guanine nucleotide exchange factor 4 (Rapgef4).